A 131-amino-acid chain; its full sequence is C-type natriuretic peptide (131 aa).

The first 20 residues, 1-20, serve as a signal peptide directing secretion; the sequence is MMCKALVFAVLLLAVPLERA. Positions 21–109 are excised as a propeptide; it reads DSRALRTPVD…KRALPDRAKR (89 aa). C115 and C131 are disulfide-bonded.

The protein belongs to the natriuretic peptide family. In terms of tissue distribution, highly expressed in brain and liver, and moderately in gut, gills and heart. Expressed to a low level in atrium, ventricle and liver of fresh water eels.

It localises to the secreted. Its function is as follows. Hormone which plays a role in endochondral ossification through regulation of cartilaginous growth plate chondrocytes proliferation and differentiation. May also be vasoactive and natriuretic. May be important for freshwater adaptation. This Anguilla japonica (Japanese eel) protein is C-type natriuretic peptide (cnp).